The chain runs to 718 residues: Scarecrow-like protein 9 (718 aa).

The segment at 305 to 338 (VEKKKASDAQGGKRRARGRGRGRGRGGGGGQNGK) is disordered. Basic residues predominate over residues 316 to 328 (GKRRARGRGRGRG). The GRAS domain occupies 335 to 713 (QNGKKEVVDL…RTVMALSVWK (379 aa)). The leucine repeat I (LRI) stretch occupies residues 342–402 (VDLRSLLIHC…EARLAGTGSQ (61 aa)). Residues 421–484 (HQLFLACCPF…YGSPKVRITG (64 aa)) form a VHIID region. The VHIID signature appears at 452–456 (VHVID). The interval 500–532 (ETGQRLAAYAKLFGVPFEYKAIAKKWDAIQLED) is leucine repeat II (LRII). Residues 541–635 (TVVNCLYRAE…MEVFGREALN (95 aa)) are PFYRE. The SAW stretch occupies residues 638–713 (ACEGWERVER…RTVMALSVWK (76 aa)).

The protein belongs to the GRAS family. Expressed in cotyledons, leaves and flowers, and in the elongation zone in root.

The protein resides in the nucleus. Its function is as follows. Probable transcription factor involved in plant development. This is Scarecrow-like protein 9 (SCL9) from Arabidopsis thaliana (Mouse-ear cress).